The primary structure comprises 254 residues: Winged helix repair factor 1 (254 aa).

The Bipartite nuclear localization signal motif lies at 4–21 (KRHHLIPETFGVKRRRKR). Winged helix domain regions lie at residues 32-104 (EPGS…GIIF), 120-179 (PYAG…LAVP), and 180-254 (GAGR…LPET).

This sequence belongs to the STK19 family. In terms of assembly, monomer in solution. Homodimer; when bound to DNA. Component of a transcription-coupled nucleotide excision repair (TC-NER) complex composed of STK19, ERCC6, ERCC8, DDA1, DDB1, ELOF1 and UVSSA which assembles and interacts with the multiprotein RNA polymerase II complex when it stalls at DNA lesions. As to expression, monocytes, hepatocytes, epithelial cells, T- and B-lymphocytes.

The protein localises to the nucleus. Its subcellular location is the cytoplasm. Its function is as follows. DNA-binding protein which is required for efficient transcription-coupled nucleotide excision repair (TC-NER). Acts as part of a TC-NER complex which assembles and interacts with RNA polymerase II (RNAPII) when it stalls at DNA lesions. TC-NER complex subunit UVSSA binds to the GTF2H1/p62 subunit of the TFIIH transcription factor complex, tethering TFIIH to the TC-NER complex. WHR1/STK19 then interacts with the XPD helicase subunit of TFIIH which guides TFIIH to DNA downstream of the stalled RNAPII, ensuring DNA repair. Directly interacts with RNAPII and also binds to downstream DNA. Promotes the timely removal of DNA damage-stalled RNAPII, allowing downstream NER factors to access DNA lesions. Required for monoubiquitination of UVSSA. Regulates repositioning and stabilization of UVSSA within the TC-NER complex. Stimulates ubiquitination of RNAPII complex member RBP1. Also binds to RNA and regulates the expression levels of many mRNAs. The polypeptide is Winged helix repair factor 1 (Homo sapiens (Human)).